The following is a 381-amino-acid chain: Pentatricopeptide repeat-containing protein 2, mitochondrial (381 aa).

Residues 157–191 form a PPR repeat; that stretch reads DTTSFNITIDMLFNKQLYESGLEVVGEMKKQGVSL.

This sequence belongs to the PTCD2 family.

The protein resides in the mitochondrion. In terms of biological role, involved in mitochondrial RNA maturation and mitochondrial respiratory chain function. In Danio rerio (Zebrafish), this protein is Pentatricopeptide repeat-containing protein 2, mitochondrial (ptcd2).